We begin with the raw amino-acid sequence, 312 residues long: MLQYQIDRIEHQVSDDRSQTGIFLIGPLERGQATTLGNSLRRVLMGGLEGSAVTAVRISGVNHEYATVPGVREDVLDILLNCKELTVNSRSQELEIGRLVVTGPAEVKARDLQFSSQVQIVDVDRPIATVHSGHSLELELHVERGVGYRPVDRRNEATTAIDLLQIDAVFMPVKKVNFTIDETAVSEGGSTRERLRMEIVTDGSITPDDAVAEAANQLIELFQPLATVTMVEEVPQEPEPTAEAQIPLEELNLSVRAYNCLKRAQVNSVSDLMGFSYEDLLEIKNFGSKSADEVIEALERIGISIPQSRTSA.

The segment at 1–229 is alpha N-terminal domain (alpha-NTD); the sequence is MLQYQIDRIE…ELFQPLATVT (229 aa). Residues 246–312 form an alpha C-terminal domain (alpha-CTD) region; sequence IPLEELNLSV…ISIPQSRTSA (67 aa).

It belongs to the RNA polymerase alpha chain family. In cyanobacteria the RNAP catalytic core is composed of 2 alpha, 1 beta, 1 beta', 1 gamma and 1 omega subunit. When a sigma factor is associated with the core the holoenzyme is formed, which can initiate transcription.

It catalyses the reaction RNA(n) + a ribonucleoside 5'-triphosphate = RNA(n+1) + diphosphate. Functionally, DNA-dependent RNA polymerase catalyzes the transcription of DNA into RNA using the four ribonucleoside triphosphates as substrates. In Prochlorococcus marinus (strain SARG / CCMP1375 / SS120), this protein is DNA-directed RNA polymerase subunit alpha.